The chain runs to 527 residues: Bifunctional purine biosynthesis protein PurH (527 aa).

Residues 1–149 form the MGS-like domain; sequence MASDFLPVRR…KNFARVAVAT (149 aa).

Belongs to the PurH family.

The enzyme catalyses (6R)-10-formyltetrahydrofolate + 5-amino-1-(5-phospho-beta-D-ribosyl)imidazole-4-carboxamide = 5-formamido-1-(5-phospho-D-ribosyl)imidazole-4-carboxamide + (6S)-5,6,7,8-tetrahydrofolate. It catalyses the reaction IMP + H2O = 5-formamido-1-(5-phospho-D-ribosyl)imidazole-4-carboxamide. It functions in the pathway purine metabolism; IMP biosynthesis via de novo pathway; 5-formamido-1-(5-phospho-D-ribosyl)imidazole-4-carboxamide from 5-amino-1-(5-phospho-D-ribosyl)imidazole-4-carboxamide (10-formyl THF route): step 1/1. The protein operates within purine metabolism; IMP biosynthesis via de novo pathway; IMP from 5-formamido-1-(5-phospho-D-ribosyl)imidazole-4-carboxamide: step 1/1. The protein is Bifunctional purine biosynthesis protein PurH of Xanthomonas oryzae pv. oryzae (strain KACC10331 / KXO85).